A 205-amino-acid chain; its full sequence is Probable molybdenum cofactor guanylyltransferase (205 aa).

Residues 10–12 (LAG), Lys22, Asp69, and Asp100 contribute to the GTP site. A Mg(2+)-binding site is contributed by Asp100.

The protein belongs to the MobA family. Requires Mg(2+) as cofactor.

Its subcellular location is the cytoplasm. The catalysed reaction is Mo-molybdopterin + GTP + H(+) = Mo-molybdopterin guanine dinucleotide + diphosphate. Functionally, transfers a GMP moiety from GTP to Mo-molybdopterin (Mo-MPT) cofactor (Moco or molybdenum cofactor) to form Mo-molybdopterin guanine dinucleotide (Mo-MGD) cofactor. In Natranaerobius thermophilus (strain ATCC BAA-1301 / DSM 18059 / JW/NM-WN-LF), this protein is Probable molybdenum cofactor guanylyltransferase.